We begin with the raw amino-acid sequence, 697 residues long: Elongation factor G (697 aa).

The 276-residue stretch at 8–283 (ERMRNIGIAA…AVVDYLPSPL (276 aa)) folds into the tr-type G domain. GTP contacts are provided by residues 17–24 (AHIDAGKT), 81–85 (DTPGH), and 135–138 (NKMD).

It belongs to the TRAFAC class translation factor GTPase superfamily. Classic translation factor GTPase family. EF-G/EF-2 subfamily.

The protein resides in the cytoplasm. Catalyzes the GTP-dependent ribosomal translocation step during translation elongation. During this step, the ribosome changes from the pre-translocational (PRE) to the post-translocational (POST) state as the newly formed A-site-bound peptidyl-tRNA and P-site-bound deacylated tRNA move to the P and E sites, respectively. Catalyzes the coordinated movement of the two tRNA molecules, the mRNA and conformational changes in the ribosome. This Solibacter usitatus (strain Ellin6076) protein is Elongation factor G.